Reading from the N-terminus, the 321-residue chain is Cytochrome c biogenesis protein CcsA (321 aa).

Helical transmembrane passes span 1-21, 36-56, 70-90, 97-117, 143-163, 229-249, 256-276, and 290-310; these read MIFITLEHILAHISFSLISVV, LSSSGGKGMIVTFVCTTGLLI, LYESFMFLSWSSSVIHIILEV, GLGAITAPSTMLTHGFATSGL, ILLSYATLLCGSLSSIAFLII, VIGLGFLLLTIGILSGAVWAN, WSWDPKETWALITWIIFAIYL, and AIIASLGSFIVWICYLGVDLL.

The protein belongs to the CcmF/CycK/Ccl1/NrfE/CcsA family. As to quaternary structure, may interact with Ccs1.

It localises to the plastid. It is found in the chloroplast thylakoid membrane. Required during biogenesis of c-type cytochromes (cytochrome c6 and cytochrome f) at the step of heme attachment. The chain is Cytochrome c biogenesis protein CcsA from Cycas taitungensis (Prince sago).